A 361-amino-acid polypeptide reads, in one-letter code: Mitochondrial import receptor subunit TOM40 homolog (361 aa).

The span at methionine 1 to proline 10 shows a compositional bias: low complexity. A disordered region spans residues methionine 1–aspartate 71. Residues proline 11–threonine 36 are compositionally biased toward pro residues. Positions leucine 40–arginine 52 are enriched in gly residues. Residues glycine 59–aspartate 71 show a composition bias toward low complexity.

Belongs to the Tom40 family. Forms part of the preprotein translocase complex of the outer mitochondrial membrane (TOM complex) which consists of at least 7 different proteins (TOMM5, TOMM6, TOMM7, TOMM20, TOMM22, TOMM40 and TOMM70). Interacts with mitochondrial targeting sequences. Interacts with TIMM29; linking the TIM22 complex to the TOM complex. Forms a complex with BCAP31 (via C-terminus) which mediates the translocation of components of the mitochondrial membrane respiratory chain NADH dehydrogenase (Complex I) from the cytosol to the mitochondria. Interacts (via N-terminus) with CYP1A1 (via mitochondrial targeting signal); this interaction is required for CYP1A1 translocation across the mitochondrial outer membrane.

Its subcellular location is the mitochondrion outer membrane. Channel-forming protein essential for import of protein precursors into mitochondria. Plays a role in the assembly of the mitochondrial membrane respiratory chain NADH dehydrogenase (Complex I) by forming a complex with BCAP31 and mediating the translocation of Complex I components from the cytosol to the mitochondria. The chain is Mitochondrial import receptor subunit TOM40 homolog from Bos taurus (Bovine).